The sequence spans 211 residues: Probable nicotinate-nucleotide adenylyltransferase (211 aa).

The protein belongs to the NadD family.

It catalyses the reaction nicotinate beta-D-ribonucleotide + ATP + H(+) = deamido-NAD(+) + diphosphate. The protein operates within cofactor biosynthesis; NAD(+) biosynthesis; deamido-NAD(+) from nicotinate D-ribonucleotide: step 1/1. In terms of biological role, catalyzes the reversible adenylation of nicotinate mononucleotide (NaMN) to nicotinic acid adenine dinucleotide (NaAD). This is Probable nicotinate-nucleotide adenylyltransferase from Gemmatimonas aurantiaca (strain DSM 14586 / JCM 11422 / NBRC 100505 / T-27).